Here is a 276-residue protein sequence, read N- to C-terminus: Syntaxin-12 (276 aa).

The residue at position 2 (S2) is an N-acetylserine. Residues S2–R248 are Cytoplasmic-facing. Residues I33 to S131 are a coiled coil. Phosphoserine is present on residues S139, S142, S218, and S225. The t-SNARE coiled-coil homology domain occupies L178–A240. Residues K249–I269 form a helical; Anchor for type IV membrane protein membrane-spanning segment. At W270 to K276 the chain is on the vesicular side.

This sequence belongs to the syntaxin family. As to quaternary structure, associates with the BLOC-1 complex. Interacts with BLOC1S6. Interacts with NAPA and SNAP23. Identified in a complex containing STX6, STX12, VAMP4 and VTI1A. Interacts with GRIPAP1. Forms a complex with GRIP1, GRIA2 and NSG1; controls the intracellular fate of AMPAR and the endosomal sorting of the GRIA2 subunit toward recycling and membrane targeting. Interacts with NSG1. Interacts with TPC1. Interacts (via N-terminus) with VPS13B.

Its subcellular location is the endosome membrane. It is found in the golgi apparatus membrane. The protein localises to the endomembrane system. It localises to the early endosome membrane. The protein resides in the recycling endosome membrane. Its function is as follows. SNARE promoting fusion of transport vesicles with target membranes. Together with SNARE STX6, promotes movement of vesicles from endosomes to the cell membrane, and may therefore function in the endocytic recycling pathway. Through complex formation with GRIP1, GRIA2 and NSG1 controls the intracellular fate of AMPAR and the endosomal sorting of the GRIA2 subunit toward recycling and membrane targeting. The protein is Syntaxin-12 (STX12) of Pongo abelii (Sumatran orangutan).